Here is a 219-residue protein sequence, read N- to C-terminus: 2-hydroxy-3-keto-5-methylthiopentenyl-1-phosphate phosphatase (219 aa).

The protein belongs to the HAD-like hydrolase superfamily. MtnX family.

It carries out the reaction 2-hydroxy-5-methylsulfanyl-3-oxopent-1-enyl phosphate + H2O = 1,2-dihydroxy-5-(methylsulfanyl)pent-1-en-3-one + phosphate. The protein operates within amino-acid biosynthesis; L-methionine biosynthesis via salvage pathway; L-methionine from S-methyl-5-thio-alpha-D-ribose 1-phosphate: step 4/6. Its function is as follows. Dephosphorylates 2-hydroxy-3-keto-5-methylthiopentenyl-1-phosphate (HK-MTPenyl-1-P) yielding 1,2-dihydroxy-3-keto-5-methylthiopentene (DHK-MTPene). The polypeptide is 2-hydroxy-3-keto-5-methylthiopentenyl-1-phosphate phosphatase (Bacillus cereus (strain ATCC 10987 / NRS 248)).